The following is a 105-amino-acid chain: Large ribosomal subunit protein uL24 (105 aa).

Belongs to the universal ribosomal protein uL24 family. As to quaternary structure, part of the 50S ribosomal subunit.

Functionally, one of two assembly initiator proteins, it binds directly to the 5'-end of the 23S rRNA, where it nucleates assembly of the 50S subunit. One of the proteins that surrounds the polypeptide exit tunnel on the outside of the subunit. The chain is Large ribosomal subunit protein uL24 from Xanthobacter autotrophicus (strain ATCC BAA-1158 / Py2).